A 199-amino-acid polypeptide reads, in one-letter code: MLLPDLHPYTILLSIFLVLVVKQLVATIGKSTIQEFVWLVYLKVSSNQSIKTYNSKQHELHETNRQKRAISAQDEYAKWTKLNRQADKLSAELQKLNQEIQQQKSSIDKASNALILVLTTLPIWIARVFYRKTHLFYIRQGIFPKYVEWVLALPFLPNGAVGLTIWMFAVNSVVSNFSFLVSFPFAKRVSKPVRDTKVE.

The Lumenal portion of the chain corresponds to 1–11; the sequence is MLLPDLHPYTI. The chain crosses the membrane as a helical span at residues 12–31; that stretch reads LLSIFLVLVVKQLVATIGKS. The Cytoplasmic segment spans residues 32–115; it reads TIQEFVWLVY…SIDKASNALI (84 aa). Residues 76–116 are a coiled coil; that stretch reads YAKWTKLNRQADKLSAELQKLNQEIQQQKSSIDKASNALIL. Residues 116–136 form a helical membrane-spanning segment; that stretch reads LVLTTLPIWIARVFYRKTHLF. Residues 137 to 160 lie on the Lumenal side of the membrane; that stretch reads YIRQGIFPKYVEWVLALPFLPNGA. The helical transmembrane segment at 161 to 177 threads the bilayer; sequence VGLTIWMFAVNSVVSNF. Residues 178–199 lie on the Cytoplasmic side of the membrane; it reads SFLVSFPFAKRVSKPVRDTKVE.

Belongs to the WRB/GET1 family. As to quaternary structure, component of the Golgi to ER traffic (GET) complex, which is composed of GET1, GET2 and GET3. Within the complex, GET1 and GET2 form a heterotetramer which is stabilized by phosphatidylinositol binding and which binds to the GET3 homodimer.

It localises to the endoplasmic reticulum membrane. Its subcellular location is the golgi apparatus membrane. Its function is as follows. Required for the post-translational delivery of tail-anchored (TA) proteins to the endoplasmic reticulum. Together with GET2, acts as a membrane receptor for soluble GET3, which recognizes and selectively binds the transmembrane domain of TA proteins in the cytosol. The GET complex cooperates with the HDEL receptor ERD2 to mediate the ATP-dependent retrieval of resident ER proteins that contain a C-terminal H-D-E-L retention signal from the Golgi to the ER. The sequence is that of Golgi to ER traffic protein 1 from Candida albicans (strain WO-1) (Yeast).